Reading from the N-terminus, the 690-residue chain is Proprotein convertase subtilisin/kexin type 9 (690 aa).

Residues Met-1 to Ala-28 form the signal peptide. The propeptide occupies Gln-29–Gln-150. Position 36 is a sulfotyrosine (Tyr-36). Ser-45 is modified (phosphoserine). Residues Thr-75–Val-147 form the Inhibitor I9 domain. Residues Pro-153–Trp-459 form the Peptidase S8 domain. Active-site charge relay system residues include Asp-184 and His-224. Intrachain disulfides connect Cys-221–Cys-253 and Cys-321–Cys-356. The active-site Charge relay system is Ser-384. Residues Gly-448–Gln-690 are C-terminal domain. 3 disulfides stabilise this stretch: Cys-455/Cys-525, Cys-475/Cys-524, and Cys-484/Cys-507. N-linked (GlcNAc...) asparagine glycosylation occurs at Asn-531. Disulfide bonds link Cys-532–Cys-599, Cys-550–Cys-598, Cys-560–Cys-586, Cys-606–Cys-677, Cys-624–Cys-676, and Cys-633–Cys-652. Ser-686 carries the phosphoserine modification.

This sequence belongs to the peptidase S8 family. As to quaternary structure, monomer. Can self-associate to form dimers and higher multimers which may have increased LDLR degrading activity. The precursor protein but not the mature protein may form multimers. Interacts with APOB, VLDLR, LRP8/APOER2 and BACE1. The full-length immature form (pro-PCSK9) interacts with SCNN1A, SCNN1B and SCNN1G. The pro-PCSK9 form (via C-terminal domain) interacts with LDLR. Interacts (via the C-terminal domain) with ANXA2 (via repeat Annexin 1); the interaction inhibits the degradation of LDLR. The cofactor is Ca(2+). Cleavage by furin and PCSK5 generates a truncated inactive protein that is unable to induce LDLR degradation. In terms of processing, undergoes autocatalytic cleavage in the endoplasmic reticulum to release the propeptide from the N-terminus and the cleavage of the propeptide is strictly required for its maturation and activation. The cleaved propeptide however remains associated with the catalytic domain through non-covalent interactions, preventing potential substrates from accessing its active site. As a result, it is secreted from cells as a propeptide-containing, enzymatically inactive protein. Post-translationally, phosphorylation protects the propeptide against proteolysis.

Its subcellular location is the cytoplasm. The protein localises to the secreted. It is found in the endosome. The protein resides in the lysosome. It localises to the cell surface. Its subcellular location is the endoplasmic reticulum. The protein localises to the golgi apparatus. With respect to regulation, its proteolytic activity is autoinhibited by the non-covalent binding of the propeptide to the catalytic domain. Inhibited by EGTA. Crucial player in the regulation of plasma cholesterol homeostasis. Binds to low-density lipid receptor family members: low density lipoprotein receptor (LDLR), very low density lipoprotein receptor (VLDLR), apolipoprotein E receptor (LRP1/APOER) and apolipoprotein receptor 2 (LRP8/APOER2), and promotes their degradation in intracellular acidic compartments. Acts via a non-proteolytic mechanism to enhance the degradation of the hepatic LDLR through a clathrin LDLRAP1/ARH-mediated pathway. May prevent the recycling of LDLR from endosomes to the cell surface or direct it to lysosomes for degradation. Can induce ubiquitination of LDLR leading to its subsequent degradation. Inhibits intracellular degradation of APOB via the autophagosome/lysosome pathway in a LDLR-independent manner. Involved in the disposal of non-acetylated intermediates of BACE1 in the early secretory pathway. Inhibits epithelial Na(+) channel (ENaC)-mediated Na(+) absorption by reducing ENaC surface expression primarily by increasing its proteasomal degradation. Regulates neuronal apoptosis via modulation of LRP8/APOER2 levels and related anti-apoptotic signaling pathways. In Pongo pygmaeus (Bornean orangutan), this protein is Proprotein convertase subtilisin/kexin type 9 (PCSK9).